Here is a 105-residue protein sequence, read N- to C-terminus: UPF0145 protein lpl0253 (105 aa).

The protein belongs to the UPF0145 family.

In Legionella pneumophila (strain Lens), this protein is UPF0145 protein lpl0253.